We begin with the raw amino-acid sequence, 548 residues long: Rhotekin (548 aa).

Residues 10–85 (DLNMLYIRQM…LQRRKEAQVL (76 aa)) form the REM-1 domain. A phosphoserine mark is found at serine 22 and serine 93. The tract at residues 83 to 103 (QVLGKTGRRPSDSVQPPERSP) is disordered. Position 217 is an asymmetric dimethylarginine (arginine 217). Serine 219 bears the Phosphoserine mark. The region spanning 296-403 (QPTASGTLRV…WMEALWQLFL (108 aa)) is the PH domain. Residues serine 504, serine 513, and serine 528 each carry the phosphoserine modification. Positions 506-548 (DAVPADHSLGPSRSVAPLPPQRSPQSRGFYSKSQLSTWLQSPV) are disordered. Positions 528 to 548 (SPQSRGFYSKSQLSTWLQSPV) are enriched in polar residues.

Interacts via its C-terminal region with the TAX1BP3 PDZ domain. This interaction facilitates Rho-mediated activation of the c-Fos serum response element (SRE). Interacts with SEPT9. Specifically binds to GTP-bound RHOA, RHOB and RHOC and inhibits their GTPase activity.

Its function is as follows. Mediates Rho signaling to activate NF-kappa-B and may confer increased resistance to apoptosis to cells in gastric tumorigenesis. May play a novel role in the organization of septin structures. This is Rhotekin from Rattus norvegicus (Rat).